Reading from the N-terminus, the 465-residue chain is Siroheme synthase (465 aa).

The segment at 1 to 203 (MDFLPLFHSL…GRPAEAERLL (203 aa)) is precorrin-2 dehydrogenase /sirohydrochlorin ferrochelatase. NAD(+) contacts are provided by residues 22 to 23 (EV) and 43 to 44 (PQ). S128 carries the post-translational modification Phosphoserine. Residues 217–465 (GEVYLVGAGP…AWFEGAREDA (249 aa)) form a uroporphyrinogen-III C-methyltransferase region. Residue P226 coordinates S-adenosyl-L-methionine. Catalysis depends on D249, which acts as the Proton acceptor. The active-site Proton donor is K271. Residues 302–304 (GGD), I307, 332–333 (TA), M384, and G413 contribute to the S-adenosyl-L-methionine site.

In the N-terminal section; belongs to the precorrin-2 dehydrogenase / sirohydrochlorin ferrochelatase family. This sequence in the C-terminal section; belongs to the precorrin methyltransferase family.

The catalysed reaction is uroporphyrinogen III + 2 S-adenosyl-L-methionine = precorrin-2 + 2 S-adenosyl-L-homocysteine + H(+). It catalyses the reaction precorrin-2 + NAD(+) = sirohydrochlorin + NADH + 2 H(+). It carries out the reaction siroheme + 2 H(+) = sirohydrochlorin + Fe(2+). Its pathway is cofactor biosynthesis; adenosylcobalamin biosynthesis; precorrin-2 from uroporphyrinogen III: step 1/1. It functions in the pathway cofactor biosynthesis; adenosylcobalamin biosynthesis; sirohydrochlorin from precorrin-2: step 1/1. The protein operates within porphyrin-containing compound metabolism; siroheme biosynthesis; precorrin-2 from uroporphyrinogen III: step 1/1. It participates in porphyrin-containing compound metabolism; siroheme biosynthesis; siroheme from sirohydrochlorin: step 1/1. Its pathway is porphyrin-containing compound metabolism; siroheme biosynthesis; sirohydrochlorin from precorrin-2: step 1/1. Multifunctional enzyme that catalyzes the SAM-dependent methylations of uroporphyrinogen III at position C-2 and C-7 to form precorrin-2 via precorrin-1. Then it catalyzes the NAD-dependent ring dehydrogenation of precorrin-2 to yield sirohydrochlorin. Finally, it catalyzes the ferrochelation of sirohydrochlorin to yield siroheme. This is Siroheme synthase from Pseudomonas aeruginosa (strain ATCC 15692 / DSM 22644 / CIP 104116 / JCM 14847 / LMG 12228 / 1C / PRS 101 / PAO1).